Reading from the N-terminus, the 447-residue chain is Na(+)-translocating NADH-quinone reductase subunit A (447 aa).

Belongs to the NqrA family. Composed of six subunits; NqrA, NqrB, NqrC, NqrD, NqrE and NqrF.

The enzyme catalyses a ubiquinone + n Na(+)(in) + NADH + H(+) = a ubiquinol + n Na(+)(out) + NAD(+). In terms of biological role, NQR complex catalyzes the reduction of ubiquinone-1 to ubiquinol by two successive reactions, coupled with the transport of Na(+) ions from the cytoplasm to the periplasm. NqrA to NqrE are probably involved in the second step, the conversion of ubisemiquinone to ubiquinol. This chain is Na(+)-translocating NADH-quinone reductase subunit A, found in Haemophilus influenzae (strain 86-028NP).